Reading from the N-terminus, the 761-residue chain is Elongation factor G, mitochondrial (761 aa).

The N-terminal 42 residues, Met-1–Arg-42, are a transit peptide targeting the mitochondrion. One can recognise a tr-type G domain in the interval Asn-68–Ser-349. Residues Ala-77–Thr-84, Asp-148–His-152, and Asn-202–Asp-205 each bind GTP.

It belongs to the TRAFAC class translation factor GTPase superfamily. Classic translation factor GTPase family. EF-G/EF-2 subfamily. Post-translationally, the precursor is processed in two steps involving mitochondrial intermediate peptidase (MIP) and mitochondrial processing peptidase (MPP).

It is found in the mitochondrion. Its pathway is protein biosynthesis; polypeptide chain elongation. In terms of biological role, mitochondrial GTPase that catalyzes the GTP-dependent ribosomal translocation step during translation elongation. During this step, the ribosome changes from the pre-translocational (PRE) to the post-translocational (POST) state as the newly formed A-site-bound peptidyl-tRNA and P-site-bound deacylated tRNA move to the P and E sites, respectively. Catalyzes the coordinated movement of the two tRNA molecules, the mRNA and conformational changes in the ribosome. This is Elongation factor G, mitochondrial from Saccharomyces cerevisiae (strain YJM789) (Baker's yeast).